A 771-amino-acid chain; its full sequence is Probable aconitate hydratase, mitochondrial (771 aa).

Residues Gln-86 and 179-181 (DSH) each bind substrate. Cys-372, Cys-435, and Cys-438 together coordinate [4Fe-4S] cluster. Substrate-binding positions include Arg-461, Arg-466, Arg-594, and 657 to 658 (SR).

This sequence belongs to the aconitase/IPM isomerase family. In terms of assembly, monomer. The cofactor is [4Fe-4S] cluster.

Its subcellular location is the mitochondrion. It carries out the reaction citrate = D-threo-isocitrate. It participates in carbohydrate metabolism; tricarboxylic acid cycle; isocitrate from oxaloacetate: step 2/2. Catalyzes the isomerization of citrate to isocitrate via cis-aconitate. This is Probable aconitate hydratase, mitochondrial (aco2) from Dictyostelium discoideum (Social amoeba).